The sequence spans 271 residues: 5-deoxy-glucuronate isomerase (271 aa).

Belongs to the isomerase IolB family.

The catalysed reaction is 5-deoxy-D-glucuronate = 5-dehydro-2-deoxy-D-gluconate. Its pathway is polyol metabolism; myo-inositol degradation into acetyl-CoA; acetyl-CoA from myo-inositol: step 4/7. Involved in the isomerization of 5-deoxy-glucuronate (5DG) to 5-dehydro-2-deoxy-D-gluconate (DKG or 2-deoxy-5-keto-D-gluconate). The polypeptide is 5-deoxy-glucuronate isomerase (Bacillus subtilis subsp. natto).